A 240-amino-acid chain; its full sequence is MTENTESPQSVATDIPEHKRRIKSFVLRQGRLSQAQQNAIDTMWPQYGLTLEDKLLDFNTLFGREAPTIIEIGFGMGNSLAAMAEAHPENNYIGIEVHRPGVGALLKLVAEKGLTNVRVFNEDAIEVLNRQIPKNSLSAVYLFFPDPWHKTKHKKRRILQAEFAEKIAQYLAPGGQFHMATDWEDYALHMMSVMSAAKGYRNISGEGQYTPRPDYRPLTKFEQRGHRLGHGVWDLVFERI.

Glu-71, Glu-96, Asp-123, and Asp-146 together coordinate S-adenosyl-L-methionine. Asp-146 is an active-site residue. Substrate is bound by residues Lys-150, Asp-182, and 219 to 222 (TKFE).

The protein belongs to the class I-like SAM-binding methyltransferase superfamily. TrmB family.

It carries out the reaction guanosine(46) in tRNA + S-adenosyl-L-methionine = N(7)-methylguanosine(46) in tRNA + S-adenosyl-L-homocysteine. The protein operates within tRNA modification; N(7)-methylguanine-tRNA biosynthesis. Catalyzes the formation of N(7)-methylguanine at position 46 (m7G46) in tRNA. This Hydrogenovibrio crunogenus (strain DSM 25203 / XCL-2) (Thiomicrospira crunogena) protein is tRNA (guanine-N(7)-)-methyltransferase.